The following is a 401-amino-acid chain: Argininosuccinate synthase (401 aa).

ATP contacts are provided by residues 9-17 and Ala36; that span reads AYSGGLDTS. Residues Tyr87 and Ser92 each coordinate L-citrulline. Residue Gly117 participates in ATP binding. Residues Thr119, Asn123, and Asp124 each contribute to the L-aspartate site. Residue Asn123 coordinates L-citrulline. Residues Arg127, Ser176, Ser185, Glu261, and Tyr273 each coordinate L-citrulline.

This sequence belongs to the argininosuccinate synthase family. Type 1 subfamily. In terms of assembly, homotetramer.

Its subcellular location is the cytoplasm. The catalysed reaction is L-citrulline + L-aspartate + ATP = 2-(N(omega)-L-arginino)succinate + AMP + diphosphate + H(+). It functions in the pathway amino-acid biosynthesis; L-arginine biosynthesis; L-arginine from L-ornithine and carbamoyl phosphate: step 2/3. The chain is Argininosuccinate synthase from Syntrophobacter fumaroxidans (strain DSM 10017 / MPOB).